Reading from the N-terminus, the 343-residue chain is Multidrug resistance protein MdtN (343 aa).

Residues 1-12 (MESTPKKAPRSK) lie on the Cytoplasmic side of the membrane. A helical; Signal-anchor for type II membrane protein membrane pass occupies residues 13–33 (FPALLVVALALVALVFVIWRV). The Periplasmic segment spans residues 34-343 (DSAPSTNDAY…ASAVANLEPQ (310 aa)).

It belongs to the membrane fusion protein (MFP) (TC 8.A.1) family. As to quaternary structure, could be part of a tripartite efflux system composed of MdtN, MdtO and MdtP.

The protein resides in the cell inner membrane. Its function is as follows. Could be involved in resistance to puromycin, acriflavine and tetraphenylarsonium chloride. In Escherichia coli O157:H7, this protein is Multidrug resistance protein MdtN (mdtN).